The following is a 209-amino-acid chain: Scoloptoxin SSD346 (209 aa).

The signal sequence occupies residues 1–22 (NILLSSTLFVLLMFQIIGSGLG).

Post-translationally, contains 2 disulfide bonds. Expressed by the venom gland.

The protein resides in the secreted. Its function is as follows. May act as a voltage-gated calcium channel inhibitor. This chain is Scoloptoxin SSD346, found in Scolopendra dehaani (Thai centipede).